We begin with the raw amino-acid sequence, 235 residues long: Ribitol-5-phosphate cytidylyltransferase (235 aa).

Residues 7–10, 82–88, and serine 113 each bind CTP; these read LAGG and GADRNTS.

This sequence belongs to the IspD/TarI cytidylyltransferase family. TarI subfamily.

The catalysed reaction is D-ribitol 5-phosphate + CTP + H(+) = CDP-L-ribitol + diphosphate. Its pathway is cell wall biogenesis; poly(ribitol phosphate) teichoic acid biosynthesis. Its function is as follows. Catalyzes the transfer of the cytidylyl group of CTP to D-ribitol 5-phosphate. In Streptococcus pneumoniae serotype 19F (strain G54), this protein is Ribitol-5-phosphate cytidylyltransferase.